A 1254-amino-acid polypeptide reads, in one-letter code: Zinc finger protein BRUTUS-like At1g18910 (1254 aa).

The segment at 1-30 (MGVGDPLPLPPEKNRREVNKPPDIASTSSS) is disordered. The helical transmembrane segment at 454–474 (IHFLPLGLLKCVIMWFSAQLP) threads the bilayer. The segment at 1013–1082 (PHKLIFGCKH…ASCSNISCSS (70 aa)) adopts a CHY-type zinc-finger fold. Residues Cys-1020, His-1022, Cys-1033, Cys-1034, Cys-1040, Cys-1043, His-1044, His-1050, Cys-1062, Cys-1065, Cys-1075, Cys-1080, Cys-1089, Cys-1092, His-1103, Cys-1104, Cys-1107, Cys-1110, His-1122, Cys-1123, Cys-1126, Cys-1129, His-1137, and Cys-1139 each coordinate Zn(2+). The CTCHY-type zinc-finger motif lies at 1084-1147 (MGKYYCKICK…VCREKCLEDN (64 aa)). Residues 1148-1190 (CPICHEYIFTSNSPVKALPCGHVMHSTCFQEYTCSHYTCPICS) form an RING-type; atypical zinc finger.

Binds zinc and iron ions.

The protein resides in the membrane. The protein localises to the nucleus. It functions in the pathway protein modification; protein ubiquitination. In terms of biological role, probable E3 ubiquitin-protein ligase that may regulate the response to iron deficiency and thus contributes to iron homeostasis. This is Zinc finger protein BRUTUS-like At1g18910 from Arabidopsis thaliana (Mouse-ear cress).